Here is a 151-residue protein sequence, read N- to C-terminus: uncharacterized protein (151 aa).

One can recognise a Response regulatory domain in the interval Lys-2–Gln-133. The residue at position 53 (Asp-53) is a 4-aspartylphosphate.

This is an uncharacterized protein from Sinorhizobium fredii (strain NBRC 101917 / NGR234).